The following is a 124-amino-acid chain: Phosphoribosyl-AMP cyclohydrolase (124 aa).

A Mg(2+)-binding site is contributed by D82. C83 contacts Zn(2+). Mg(2+) is bound by residues D84 and D86. Zn(2+) is bound by residues C99 and C106.

This sequence belongs to the PRA-CH family. In terms of assembly, homodimer. Mg(2+) is required as a cofactor. Requires Zn(2+) as cofactor.

The protein resides in the cytoplasm. The catalysed reaction is 1-(5-phospho-beta-D-ribosyl)-5'-AMP + H2O = 1-(5-phospho-beta-D-ribosyl)-5-[(5-phospho-beta-D-ribosylamino)methylideneamino]imidazole-4-carboxamide. The protein operates within amino-acid biosynthesis; L-histidine biosynthesis; L-histidine from 5-phospho-alpha-D-ribose 1-diphosphate: step 3/9. Functionally, catalyzes the hydrolysis of the adenine ring of phosphoribosyl-AMP. The protein is Phosphoribosyl-AMP cyclohydrolase of Zymomonas mobilis subsp. mobilis (strain ATCC 31821 / ZM4 / CP4).